Consider the following 431-residue polypeptide: Glutamate-1-semialdehyde 2,1-aminomutase (431 aa).

Lys265 is modified (N6-(pyridoxal phosphate)lysine).

Belongs to the class-III pyridoxal-phosphate-dependent aminotransferase family. HemL subfamily. Homodimer. The cofactor is pyridoxal 5'-phosphate.

It localises to the cytoplasm. It catalyses the reaction (S)-4-amino-5-oxopentanoate = 5-aminolevulinate. It functions in the pathway porphyrin-containing compound metabolism; protoporphyrin-IX biosynthesis; 5-aminolevulinate from L-glutamyl-tRNA(Glu): step 2/2. In Aliivibrio salmonicida (strain LFI1238) (Vibrio salmonicida (strain LFI1238)), this protein is Glutamate-1-semialdehyde 2,1-aminomutase.